We begin with the raw amino-acid sequence, 141 residues long: Hemoglobin subunit alpha (141 aa).

The Globin domain occupies 1-141; the sequence is VLSPADKTNV…VSTVLTSKYR (141 aa). Ser-3 carries the post-translational modification Phosphoserine. An N6-succinyllysine modification is found at Lys-7. Thr-8 is modified (phosphothreonine). Position 11 is an N6-succinyllysine (Lys-11). Ser-35 is subject to Phosphoserine. Lys-40 carries the post-translational modification N6-succinyllysine. A Phosphoserine modification is found at Ser-49. His-58 is a binding site for O2. A heme b-binding site is contributed by His-87. A Phosphoserine modification is found at Ser-102. Thr-108 is subject to Phosphothreonine. Phosphoserine is present on Ser-124. A phosphothreonine mark is found at Thr-134 and Thr-137. Phosphoserine is present on Ser-138.

Belongs to the globin family. In terms of assembly, heterotetramer of two alpha chains and two beta chains. In terms of tissue distribution, red blood cells.

In terms of biological role, involved in oxygen transport from the lung to the various peripheral tissues. Functionally, hemopressin acts as an antagonist peptide of the cannabinoid receptor CNR1. Hemopressin-binding efficiently blocks cannabinoid receptor CNR1 and subsequent signaling. This Eulemur fulvus fulvus (Brown lemur) protein is Hemoglobin subunit alpha (HBA).